A 197-amino-acid polypeptide reads, in one-letter code: dTTP/UTP pyrophosphatase (197 aa).

Asp-70 acts as the Proton acceptor in catalysis.

It belongs to the Maf family. YhdE subfamily. A divalent metal cation serves as cofactor.

The protein resides in the cytoplasm. The enzyme catalyses dTTP + H2O = dTMP + diphosphate + H(+). It carries out the reaction UTP + H2O = UMP + diphosphate + H(+). In terms of biological role, nucleoside triphosphate pyrophosphatase that hydrolyzes dTTP and UTP. May have a dual role in cell division arrest and in preventing the incorporation of modified nucleotides into cellular nucleic acids. The sequence is that of dTTP/UTP pyrophosphatase (yceF2) from Shigella boydii serotype 4 (strain Sb227).